The following is a 249-amino-acid chain: tRNA pseudouridine synthase A (249 aa).

D54 serves as the catalytic Nucleophile. Substrate is bound at residue Y111.

This sequence belongs to the tRNA pseudouridine synthase TruA family. In terms of assembly, homodimer.

The enzyme catalyses uridine(38/39/40) in tRNA = pseudouridine(38/39/40) in tRNA. Functionally, formation of pseudouridine at positions 38, 39 and 40 in the anticodon stem and loop of transfer RNAs. This Mycoplasma capricolum subsp. capricolum (strain California kid / ATCC 27343 / NCTC 10154) protein is tRNA pseudouridine synthase A.